The following is a 139-amino-acid chain: Thioredoxin 2 (139 aa).

The segment at 5 to 18 (CTHCQAINRIPDDR) is a zinc-finger region. The region spanning 26 to 139 (GRCGHDLFDG…PFDSWLNESL (114 aa)) is the Thioredoxin domain. An intrachain disulfide couples cysteine 64 to cysteine 67.

Belongs to the thioredoxin family.

The protein localises to the cytoplasm. It carries out the reaction [protein]-dithiol + NAD(+) = [protein]-disulfide + NADH + H(+). It catalyses the reaction [protein]-dithiol + NADP(+) = [protein]-disulfide + NADPH + H(+). In terms of biological role, efficient electron donor for the essential enzyme ribonucleotide reductase. Is also able to reduce the interchain disulfide bridges of insulin. This Escherichia coli O6:H1 (strain CFT073 / ATCC 700928 / UPEC) protein is Thioredoxin 2 (trxC).